Reading from the N-terminus, the 301-residue chain is Glycine--tRNA ligase alpha subunit (301 aa).

This sequence belongs to the class-II aminoacyl-tRNA synthetase family. In terms of assembly, tetramer of two alpha and two beta subunits.

The protein resides in the cytoplasm. The enzyme catalyses tRNA(Gly) + glycine + ATP = glycyl-tRNA(Gly) + AMP + diphosphate. This is Glycine--tRNA ligase alpha subunit from Glaesserella parasuis serovar 5 (strain SH0165) (Haemophilus parasuis).